A 543-amino-acid chain; its full sequence is Cytochrome P450 1B1 (543 aa).

Heme is bound at residue C470.

Belongs to the cytochrome P450 family. It depends on heme as a cofactor.

It localises to the endoplasmic reticulum membrane. It is found in the microsome membrane. The protein localises to the mitochondrion. The catalysed reaction is an organic molecule + reduced [NADPH--hemoprotein reductase] + O2 = an alcohol + oxidized [NADPH--hemoprotein reductase] + H2O + H(+). The enzyme catalyses 17beta-estradiol + reduced [NADPH--hemoprotein reductase] + O2 = 2-hydroxy-17beta-estradiol + oxidized [NADPH--hemoprotein reductase] + H2O + H(+). It catalyses the reaction 17beta-estradiol + reduced [NADPH--hemoprotein reductase] + O2 = 4-hydroxy-17beta-estradiol + oxidized [NADPH--hemoprotein reductase] + H2O + H(+). It carries out the reaction estrone + reduced [NADPH--hemoprotein reductase] + O2 = 2-hydroxyestrone + oxidized [NADPH--hemoprotein reductase] + H2O + H(+). The catalysed reaction is estrone + reduced [NADPH--hemoprotein reductase] + O2 = 4-hydroxyestrone + oxidized [NADPH--hemoprotein reductase] + H2O + H(+). The enzyme catalyses testosterone + reduced [NADPH--hemoprotein reductase] + O2 = 6beta,17beta-dihydroxyandrost-4-en-3-one + oxidized [NADPH--hemoprotein reductase] + H2O + H(+). It catalyses the reaction progesterone + reduced [NADPH--hemoprotein reductase] + O2 = 6beta-hydroxyprogesterone + oxidized [NADPH--hemoprotein reductase] + H2O + H(+). It carries out the reaction progesterone + reduced [NADPH--hemoprotein reductase] + O2 = 16alpha-hydroxyprogesterone + oxidized [NADPH--hemoprotein reductase] + H2O + H(+). The catalysed reaction is all-trans-retinol + reduced [NADPH--hemoprotein reductase] + O2 = all-trans-retinal + oxidized [NADPH--hemoprotein reductase] + 2 H2O + H(+). The enzyme catalyses all-trans-retinal + reduced [NADPH--hemoprotein reductase] + O2 = all-trans-retinoate + oxidized [NADPH--hemoprotein reductase] + H2O + 2 H(+). It catalyses the reaction (5Z,8Z,11Z,14Z)-eicosatetraenoate + reduced [NADPH--hemoprotein reductase] + O2 = (8R,9S)-epoxy-(5Z,11Z,14Z)-eicosatrienoate + oxidized [NADPH--hemoprotein reductase] + H2O + H(+). It carries out the reaction (5Z,8Z,11Z,14Z)-eicosatetraenoate + reduced [NADPH--hemoprotein reductase] + O2 = (11R,12S)-epoxy-(5Z,8Z,14Z)-eicosatrienoate + oxidized [NADPH--hemoprotein reductase] + H2O + H(+). The catalysed reaction is (5Z,8Z,11Z,14Z)-eicosatetraenoate + reduced [NADPH--hemoprotein reductase] + O2 = (11S,12R)-epoxy-(5Z,8Z,14Z)-eicosatrienoate + oxidized [NADPH--hemoprotein reductase] + H2O + H(+). The enzyme catalyses (5Z,8Z,11Z,14Z)-eicosatetraenoate + reduced [NADPH--hemoprotein reductase] + O2 = (14S,15R)-epoxy-(5Z,8Z,11Z)-eicosatrienoate + oxidized [NADPH--hemoprotein reductase] + H2O + H(+). It catalyses the reaction (5Z,8Z,11Z,14Z)-eicosatetraenoate + reduced [NADPH--hemoprotein reductase] + O2 = (14R,15S)-epoxy-(5Z,8Z,11Z)-eicosatrienoate + oxidized [NADPH--hemoprotein reductase] + H2O + H(+). It carries out the reaction (5S)-hydroperoxy-(6E,8Z,11Z,14Z)-eicosatetraenoate = 5-oxo-(6E,8Z,11Z,14Z)-eicosatetraenoate + H2O. The catalysed reaction is (12S)-hydroperoxy-(5Z,8Z,10E,14Z)-eicosatetraenoate = 12-oxo-(5Z,8Z,10E,14Z)-eicosatetraenoate + H2O. The enzyme catalyses (15S)-hydroperoxy-(5Z,8Z,11Z,13E)-eicosatetraenoate = 15-oxo-(5Z,8Z,11Z,13E)-eicosatetraenoate + H2O. It catalyses the reaction (13S)-hydroperoxy-(9Z,11E)-octadecadienoate = 13-oxo-(9Z,11E)-octadecadienoate + H2O. It functions in the pathway steroid hormone biosynthesis. It participates in cofactor metabolism; retinol metabolism. The protein operates within lipid metabolism; arachidonate metabolism. With respect to regulation, enzyme activity is increased by cytochrome b5. Enzyme activity is increased by liposomes containing anionic phospholipids, phosphatidic acid and cardiolipin. Inhibited by naringenin with an IC(50) of 5 uM. In terms of biological role, a cytochrome P450 monooxygenase involved in the metabolism of various endogenous substrates, including fatty acids, steroid hormones and vitamins. Mechanistically, uses molecular oxygen inserting one oxygen atom into a substrate, and reducing the second into a water molecule, with two electrons provided by NADPH via cytochrome P450 reductase (NADPH--hemoprotein reductase). Exhibits catalytic activity for the formation of hydroxyestrogens from 17beta-estradiol (E2), namely 2- and 4-hydroxy E2. Metabolizes testosterone and progesterone to B or D ring hydroxylated metabolites. May act as a major enzyme for all-trans retinoic acid biosynthesis in extrahepatic tissues. Catalyzes two successive oxidative transformation of all-trans retinol to all-trans retinal and then to the active form all-trans retinoic acid. Catalyzes the epoxidation of double bonds of certain PUFA. Converts arachidonic acid toward epoxyeicosatrienoic acid (EpETrE) regioisomers, 8,9-, 11,12-, and 14,15- EpETrE, that function as lipid mediators in the vascular system. Additionally, displays dehydratase activity toward oxygenated eicosanoids including hydroperoxyeicosatetraenoates (HpETEs). This activity is independent of cytochrome P450 reductase, NADPH, and O2. Also involved in the oxidative metabolism of xenobiotics, particularly converting polycyclic aromatic hydrocarbons and heterocyclic aryl amines procarcinogens to DNA-damaging products. Plays an important role in retinal vascular development. Under ambient/hyperoxic O2 conditions, promotes angiogenesis and capillary morphogenesis of retinal endothelial cells and pericytes, likely by metabolizing the oxygenated products symptomatic of oxidative stress. Also, contributes to oxidative homeostasis and ultrastructural organization and function of trabecular meshwork tissue through modulation of POSTN expression. This is Cytochrome P450 1B1 from Rattus norvegicus (Rat).